Reading from the N-terminus, the 483-residue chain is MVAVKEATNVGKITQVIGPVIDAQFPSGKLPRIYNALKVQGRNSAGNEVAVTCEVQQLLGDNQVRAVAMSSTDGLVRGMDVVDTGAPISVPVGTGTLGRIFNVLGEPVDNKGPVPAGETFPIHRPAPKLVDLETKPQVFETGIKVIDLLTPYRQGGKIGLFGGAGVGKTVIMMELINNIAIQHGGVSVFGGVGERTREGNDLYNEMIESNVINADKPEESKIALVYGQMNEPPGARMRVGLTALTMAEYFRDVNKQDVLLFIDNIFRFVQAGSEVSALLGRMPSAVGYQPTLGTDVGDLQERITSTKEGSITSIQAVYVPADDLTDPAPATTFAHLDGTTVLSRGLAAKGIYPAVDPLDSTSTMLQPSIVGSEHYDTAREVQSTLQRYKELQDIIAILGLDELSEEDRLTVDRARKIERFLSQPFFVAEVFTGAPGKYVSLADTIKGFKAILAGELDDLPEQAFYLVGDIEEAKAKGAKLKEG.

162–169 (GGAGVGKT) contacts ATP.

Belongs to the ATPase alpha/beta chains family. As to quaternary structure, F-type ATPases have 2 components, CF(1) - the catalytic core - and CF(0) - the membrane proton channel. CF(1) has five subunits: alpha(3), beta(3), gamma(1), delta(1), epsilon(1). CF(0) has four main subunits: a(1), b(1), b'(1) and c(9-12).

It localises to the cellular thylakoid membrane. The enzyme catalyses ATP + H2O + 4 H(+)(in) = ADP + phosphate + 5 H(+)(out). In terms of biological role, produces ATP from ADP in the presence of a proton gradient across the membrane. The catalytic sites are hosted primarily by the beta subunits. The sequence is that of ATP synthase subunit beta from Synechocystis sp. (strain ATCC 27184 / PCC 6803 / Kazusa).